The chain runs to 210 residues: Large ribosomal subunit protein uL3 (210 aa).

Residues 132 to 144 (GPMKHGSKYHRRP) show a composition bias toward basic residues. The segment at 132 to 152 (GPMKHGSKYHRRPGSAGAKGP) is disordered.

The protein belongs to the universal ribosomal protein uL3 family. In terms of assembly, part of the 50S ribosomal subunit. Forms a cluster with proteins L14 and L19.

Its function is as follows. One of the primary rRNA binding proteins, it binds directly near the 3'-end of the 23S rRNA, where it nucleates assembly of the 50S subunit. The chain is Large ribosomal subunit protein uL3 from Heliobacterium modesticaldum (strain ATCC 51547 / Ice1).